Consider the following 148-residue polypeptide: Putative cyclin-dependent kinase inhibitor SPL2 (148 aa).

Serine 59 and serine 86 each carry phosphoserine.

The protein localises to the cytoplasmic granule. The protein resides in the cytoplasm. Its function is as follows. Putative cyclin-dependent kinase (CDK) inhibitor necessary and sufficient for PHO pathway-dependent down-regulation of low-affinity phosphate transport. This is Putative cyclin-dependent kinase inhibitor SPL2 (SPL2) from Saccharomyces cerevisiae (strain YJM789) (Baker's yeast).